The sequence spans 202 residues: Small ribosomal subunit protein uS4 (202 aa).

Positions 23–42 (RKAARRSYPPGQHGQARRKR) are disordered. Positions 90 to 154 (MRLDNLVFRL…SRKLVTANLE (65 aa)) constitute an S4 RNA-binding domain.

This sequence belongs to the universal ribosomal protein uS4 family. Part of the 30S ribosomal subunit. Contacts protein S5. The interaction surface between S4 and S5 is involved in control of translational fidelity.

Its function is as follows. One of the primary rRNA binding proteins, it binds directly to 16S rRNA where it nucleates assembly of the body of the 30S subunit. With S5 and S12 plays an important role in translational accuracy. The polypeptide is Small ribosomal subunit protein uS4 (Synechococcus elongatus (strain ATCC 33912 / PCC 7942 / FACHB-805) (Anacystis nidulans R2)).